Consider the following 336-residue polypeptide: Dihydroorotate dehydrogenase (quinone) (336 aa).

FMN-binding positions include 62–66 (AGLDK) and T86. Position 66 (K66) interacts with substrate. 111-115 (NRMGF) lines the substrate pocket. FMN-binding residues include N139 and N172. Position 172 (N172) interacts with substrate. Catalysis depends on S175, which acts as the Nucleophile. N177 serves as a coordination point for substrate. FMN-binding residues include K217 and T245. Residue 246–247 (NT) participates in substrate binding. FMN is bound by residues G268, G297, and 318–319 (YS).

The protein belongs to the dihydroorotate dehydrogenase family. Type 2 subfamily. As to quaternary structure, monomer. FMN serves as cofactor.

The protein localises to the cell membrane. The enzyme catalyses (S)-dihydroorotate + a quinone = orotate + a quinol. It participates in pyrimidine metabolism; UMP biosynthesis via de novo pathway; orotate from (S)-dihydroorotate (quinone route): step 1/1. Its function is as follows. Catalyzes the conversion of dihydroorotate to orotate with quinone as electron acceptor. The sequence is that of Dihydroorotate dehydrogenase (quinone) from Escherichia coli O17:K52:H18 (strain UMN026 / ExPEC).